An 85-amino-acid chain; its full sequence is Small ribosomal subunit protein bS18 (85 aa).

This sequence belongs to the bacterial ribosomal protein bS18 family. As to quaternary structure, part of the 30S ribosomal subunit. Forms a tight heterodimer with protein bS6.

Its function is as follows. Binds as a heterodimer with protein bS6 to the central domain of the 16S rRNA, where it helps stabilize the platform of the 30S subunit. The sequence is that of Small ribosomal subunit protein bS18 from Hamiltonella defensa subsp. Acyrthosiphon pisum (strain 5AT).